Reading from the N-terminus, the 521-residue chain is Bifunctional purine biosynthesis protein PurH (521 aa).

Positions 1–147 constitute an MGS-like domain; it reads MAKISRALIS…KNNADVTVLV (147 aa).

The protein belongs to the PurH family.

It catalyses the reaction (6R)-10-formyltetrahydrofolate + 5-amino-1-(5-phospho-beta-D-ribosyl)imidazole-4-carboxamide = 5-formamido-1-(5-phospho-D-ribosyl)imidazole-4-carboxamide + (6S)-5,6,7,8-tetrahydrofolate. The catalysed reaction is IMP + H2O = 5-formamido-1-(5-phospho-D-ribosyl)imidazole-4-carboxamide. It functions in the pathway purine metabolism; IMP biosynthesis via de novo pathway; 5-formamido-1-(5-phospho-D-ribosyl)imidazole-4-carboxamide from 5-amino-1-(5-phospho-D-ribosyl)imidazole-4-carboxamide (10-formyl THF route): step 1/1. Its pathway is purine metabolism; IMP biosynthesis via de novo pathway; IMP from 5-formamido-1-(5-phospho-D-ribosyl)imidazole-4-carboxamide: step 1/1. This is Bifunctional purine biosynthesis protein PurH from Geotalea daltonii (strain DSM 22248 / JCM 15807 / FRC-32) (Geobacter daltonii).